Reading from the N-terminus, the 350-residue chain is Ion-translocating oxidoreductase complex subunit D (350 aa).

5 helical membrane-spanning segments follow: residues I20–G40, G42–L62, P68–S88, I89–A109, and P123–L143. T187 is subject to FMN phosphoryl threonine. The next 5 helical transmembrane spans lie at L215 to L235, I244 to G264, L267 to L287, L301 to P321, and D322 to T342.

This sequence belongs to the NqrB/RnfD family. As to quaternary structure, the complex is composed of six subunits: RnfA, RnfB, RnfC, RnfD, RnfE and RnfG. Requires FMN as cofactor.

The protein localises to the cell inner membrane. Part of a membrane-bound complex that couples electron transfer with translocation of ions across the membrane. This chain is Ion-translocating oxidoreductase complex subunit D, found in Citrobacter koseri (strain ATCC BAA-895 / CDC 4225-83 / SGSC4696).